The primary structure comprises 206 residues: GTP cyclohydrolase 1 (206 aa).

Positions 95, 98, and 166 each coordinate Zn(2+).

It belongs to the GTP cyclohydrolase I family. As to quaternary structure, toroid-shaped homodecamer, composed of two pentamers of five dimers.

It catalyses the reaction GTP + H2O = 7,8-dihydroneopterin 3'-triphosphate + formate + H(+). Its pathway is cofactor biosynthesis; 7,8-dihydroneopterin triphosphate biosynthesis; 7,8-dihydroneopterin triphosphate from GTP: step 1/1. This Bartonella henselae (strain ATCC 49882 / DSM 28221 / CCUG 30454 / Houston 1) (Rochalimaea henselae) protein is GTP cyclohydrolase 1.